A 295-amino-acid chain; its full sequence is 4-hydroxy-tetrahydrodipicolinate synthase (295 aa).

Thr47 provides a ligand contact to pyruvate. Tyr135 acts as the Proton donor/acceptor in catalysis. Residue Lys163 is the Schiff-base intermediate with substrate of the active site. Ile206 lines the pyruvate pocket.

This sequence belongs to the DapA family. In terms of assembly, homodimer.

It localises to the cytoplasm. The enzyme catalyses L-aspartate 4-semialdehyde + pyruvate = (2S,4S)-4-hydroxy-2,3,4,5-tetrahydrodipicolinate + H2O + H(+). It participates in amino-acid biosynthesis; L-lysine biosynthesis via DAP pathway; (S)-tetrahydrodipicolinate from L-aspartate: step 3/4. Functionally, catalyzes the condensation of (S)-aspartate-beta-semialdehyde [(S)-ASA] and pyruvate to 4-hydroxy-tetrahydrodipicolinate (HTPA). The sequence is that of 4-hydroxy-tetrahydrodipicolinate synthase from Staphylococcus saprophyticus subsp. saprophyticus (strain ATCC 15305 / DSM 20229 / NCIMB 8711 / NCTC 7292 / S-41).